The chain runs to 354 residues: UPF0496 protein At4g34330 (354 aa).

2 helical membrane passes run 200–220 and 222–242; these read IIFMATFATLVICSVLAATMA and PHVAAALAAATPPVGSMGKWI. Residues 270-341 adopt a coiled-coil conformation; that stretch reads AVQDLNNIKD…CSTDIRRART (72 aa).

The protein belongs to the UPF0496 family.

It is found in the membrane. In Arabidopsis thaliana (Mouse-ear cress), this protein is UPF0496 protein At4g34330.